The primary structure comprises 361 residues: Molybdenum import ATP-binding protein ModC 1 (361 aa).

The ABC transporter domain occupies 1–237; it reads MPADGIRARF…LDLPTAFHED (237 aa). 35–42 serves as a coordination point for ATP; sequence GHSGSGKT. In terms of domain architecture, Mop spans 296 to 361; it reads DSSITNVLPA…AQIKAVALLG (66 aa).

It belongs to the ABC transporter superfamily. Molybdate importer (TC 3.A.1.8) family. The complex is composed of two ATP-binding proteins (ModC), two transmembrane proteins (ModB) and a solute-binding protein (ModA).

It localises to the cell inner membrane. The catalysed reaction is molybdate(out) + ATP + H2O = molybdate(in) + ADP + phosphate + H(+). Functionally, part of the ABC transporter complex ModABC involved in molybdenum import. Responsible for energy coupling to the transport system. This Azotobacter vinelandii protein is Molybdenum import ATP-binding protein ModC 1.